We begin with the raw amino-acid sequence, 189 residues long: Small ribosomal subunit protein uS5 (189 aa).

The 64-residue stretch at 20–83 (FMDRLVHINR…ESAKRSLIRV (64 aa)) folds into the S5 DRBM domain.

The protein belongs to the universal ribosomal protein uS5 family. As to quaternary structure, part of the 30S ribosomal subunit. Contacts proteins S4 and S8.

With S4 and S12 plays an important role in translational accuracy. In terms of biological role, located at the back of the 30S subunit body where it stabilizes the conformation of the head with respect to the body. This chain is Small ribosomal subunit protein uS5, found in Methylocella silvestris (strain DSM 15510 / CIP 108128 / LMG 27833 / NCIMB 13906 / BL2).